The following is a 285-amino-acid chain: Hydroxyethylthiazole kinase 1 (285 aa).

Residue Met-48 participates in substrate binding. The ATP site is built by Arg-124 and Ser-183. Gly-210 is a substrate binding site.

The protein belongs to the Thz kinase family. Mg(2+) is required as a cofactor.

It carries out the reaction 5-(2-hydroxyethyl)-4-methylthiazole + ATP = 4-methyl-5-(2-phosphooxyethyl)-thiazole + ADP + H(+). The protein operates within cofactor biosynthesis; thiamine diphosphate biosynthesis; 4-methyl-5-(2-phosphoethyl)-thiazole from 5-(2-hydroxyethyl)-4-methylthiazole: step 1/1. Its function is as follows. Catalyzes the phosphorylation of the hydroxyl group of 4-methyl-5-beta-hydroxyethylthiazole (THZ). This chain is Hydroxyethylthiazole kinase 1, found in Methanosphaera stadtmanae (strain ATCC 43021 / DSM 3091 / JCM 11832 / MCB-3).